A 266-amino-acid chain; its full sequence is Sec-independent protein translocase protein TatC (266 aa).

6 helical membrane passes run 28 to 48 (MIIA…YILF), 93 to 113 (FNIY…PYIF), 134 to 154 (GIIM…YFIL), 183 to 203 (LIMH…FIYF), 221 to 241 (HAFL…IFST), and 242 to 262 (IVVL…SFYV).

The protein belongs to the TatC family. Forms a complex with TatA.

Its subcellular location is the cell inner membrane. In terms of biological role, part of the twin-arginine translocation (Tat) system that transports large folded proteins containing a characteristic twin-arginine motif in their signal peptide across membranes. This is Sec-independent protein translocase protein TatC from Blattabacterium sp. subsp. Periplaneta americana (strain BPLAN) (Periplaneta americana symbiotic bacterium).